The following is a 138-amino-acid chain: Cellular retinoic acid-binding protein 2 (138 aa).

Positions 21–31 match the Nuclear localization signal motif; it reads KALGVNMMMRK. Lysine 102 is covalently cross-linked (Glycyl lysine isopeptide (Lys-Gly) (interchain with G-Cter in SUMO)). An all-trans-retinoate-binding site is contributed by 133–135; sequence RVY.

The protein belongs to the calycin superfamily. Fatty-acid binding protein (FABP) family. As to quaternary structure, interacts with importin alpha. Interacts with RXR and RARA. Sumoylated in response to retinoic acid binding, sumoylation is critical for dissociation from ER and subsequent nuclear translocation. Embryo and skin of adult mouse.

Its subcellular location is the cytoplasm. The protein resides in the endoplasmic reticulum. It localises to the nucleus. Functionally, transports retinoic acid to the nucleus. Regulates the access of retinoic acid to the nuclear retinoic acid receptors. This is Cellular retinoic acid-binding protein 2 (Crabp2) from Mus musculus (Mouse).